The chain runs to 708 residues: Probable GTP diphosphokinase RSH3, chloroplastic (708 aa).

2 disordered regions span residues 1-50 and 109-134; these read MSLP…AAGG and HSPVSVFQGPSSSPAASRSPPASWLA. The N-terminal 58 residues, 1-58, are a transit peptide targeting the chloroplast; it reads MSLPAISLYTSPPPGAVYSSEFDPSSRGSSPPCSTAPPSTSHRPPAAAGGLSCLFSSP. Composition is skewed to low complexity over residues 29–41 and 118–131; these read SSPPCSTAPPSTS and PSSSPAASRSPPAS. Positions 233-337 constitute an HD domain; that stretch reads YLQHCVETAV…IKLADRVHNM (105 aa).

This sequence belongs to the RelA/SpoT family.

The protein resides in the plastid. It is found in the chloroplast. It carries out the reaction GTP + ATP = guanosine 3'-diphosphate 5'-triphosphate + AMP. Probable ppGpp (guanosine 3'-diphosphate 5'-diphosphate) synthetase that may be involved in a rapid plant ppGpp-mediated response to pathogens and other stresses. This chain is Probable GTP diphosphokinase RSH3, chloroplastic (RSH3), found in Oryza sativa subsp. japonica (Rice).